The chain runs to 74 residues: Protein WFDC9 (74 aa).

A signal peptide spans 1-19; it reads MKFWILLLTVSAHGIVVFL.

The protein localises to the secreted. The sequence is that of Protein WFDC9 (Wfdc9) from Rattus norvegicus (Rat).